Reading from the N-terminus, the 301-residue chain is MAFPKMRLMYVCLLVLGALCLYFSMYSLNLFKEQSFVYKKDGNFLKLPDTDCRQTPPFLVLLVTSSHKQLAERMAIRQTWGKERTVKGKQLKTFFLLGTTSSAAETKEVDQESQRHGDIIQKDFLDGYYNLTLKTMMGIEWVHRFCPQAAFVMKTDSDMFINVDYLTELLLKKNRTTRFFTGFLKLNEFPIRQPFSKWFVSKSEYPWDRYPPFCSGTGYVFSGDVASQVYNVSESVPYIKLEDVFVGLCLERLNIRLEELHSQPTFFPGGLRFSVCRFRRIVACHFIKPRTLLDYWQALEN.

At 1–7 (MAFPKMR) the chain is on the cytoplasmic side. A helical; Signal-anchor for type II membrane protein transmembrane segment spans residues 8 to 28 (LMYVCLLVLGALCLYFSMYSL). At 29–301 (NLFKEQSFVY…LLDYWQALEN (273 aa)) the chain is on the lumenal side. N-linked (GlcNAc...) asparagine glycans are attached at residues Asn-130, Asn-174, and Asn-231.

The protein belongs to the glycosyltransferase 31 family.

The protein resides in the golgi apparatus membrane. It catalyses the reaction a globoside Gb4Cer (d18:1(4E)) + UDP-alpha-D-galactose = a globoside GalGb4Cer (d18:1(4E)) + UDP + H(+). It participates in protein modification; protein glycosylation. Catalyzes the transfer of Gal to GlcNAc-based acceptors with a preference for the core3 O-linked glycan GlcNAc(beta1,3)GalNAc structure. Can use glycolipid LC3Cer as an efficient acceptor. This Pan paniscus (Pygmy chimpanzee) protein is Beta-1,3-galactosyltransferase 5 (B3GALT5).